We begin with the raw amino-acid sequence, 217 residues long: Adapter protein MecA (217 aa).

This sequence belongs to the MecA family. As to quaternary structure, homodimer.

Its function is as follows. Enables the recognition and targeting of unfolded and aggregated proteins to the ClpC protease or to other proteins involved in proteolysis. The chain is Adapter protein MecA from Listeria innocua serovar 6a (strain ATCC BAA-680 / CLIP 11262).